The chain runs to 334 residues: L-lactate dehydrogenase B chain (334 aa).

At Ala-2 the chain carries N-acetylalanine. Residue Lys-7 is modified to N6-acetyllysine. Ser-11 and Ser-44 each carry phosphoserine. NAD(+) is bound by residues 30–58 (GQVG…LEDK) and Arg-100. N6-acetyllysine is present on Lys-58. Arg-107 provides a ligand contact to substrate. Lys-119 is subject to N6-acetyllysine. Asn-139 contacts NAD(+). Substrate is bound by residues Asn-139 and Arg-170. The active-site Proton acceptor is the His-194. Tyr-240 carries the phosphotyrosine modification. Thr-249 lines the substrate pocket. Position 329 is an N6-acetyllysine (Lys-329).

Belongs to the LDH/MDH superfamily. LDH family. Homotetramer. Interacts with PTEN upstream reading frame protein MP31; the interaction leads to inhibition of mitochondrial lactate dehydrogenase activity, preventing conversion of lactate to pyruvate in mitochondria.

It is found in the cytoplasm. The protein localises to the mitochondrion inner membrane. The enzyme catalyses (S)-lactate + NAD(+) = pyruvate + NADH + H(+). The protein operates within fermentation; pyruvate fermentation to lactate; (S)-lactate from pyruvate: step 1/1. Functionally, interconverts simultaneously and stereospecifically pyruvate and lactate with concomitant interconversion of NADH and NAD(+). The polypeptide is L-lactate dehydrogenase B chain (Ldhb) (Mus musculus (Mouse)).